Here is a 319-residue protein sequence, read N- to C-terminus: Acetyl esterase (319 aa).

Positions 91 to 93 (HGG) match the Involved in the stabilization of the negatively charged intermediate by the formation of the oxyanion hole motif. Residues Ser-165, Asp-262, and His-292 contribute to the active site.

Belongs to the 'GDXG' lipolytic enzyme family. In terms of assembly, homodimer. Interacts with MalT and MelA.

It localises to the cytoplasm. Displays esterase activity towards short chain fatty esters (acyl chain length of up to 8 carbons). Able to hydrolyze triacetylglycerol (triacetin) and tributyrylglycerol (tributyrin), but not trioleylglycerol (triolein) or cholesterol oleate. Negatively regulates MalT activity by antagonizing maltotriose binding. Inhibits MelA galactosidase activity. This Escherichia coli O81 (strain ED1a) protein is Acetyl esterase.